A 312-amino-acid polypeptide reads, in one-letter code: Malate dehydrogenase (312 aa).

Residues 7-13 and aspartate 34 contribute to the NAD(+) site; that span reads GAAGGIG. Arginine 81 and arginine 87 together coordinate substrate. NAD(+) is bound by residues asparagine 94 and 117–119; that span reads ITN. 2 residues coordinate substrate: asparagine 119 and arginine 153. The active-site Proton acceptor is the histidine 177. Methionine 227 contacts NAD(+).

This sequence belongs to the LDH/MDH superfamily. MDH type 1 family. In terms of assembly, homodimer.

It carries out the reaction (S)-malate + NAD(+) = oxaloacetate + NADH + H(+). In terms of biological role, catalyzes the reversible oxidation of malate to oxaloacetate. The protein is Malate dehydrogenase of Escherichia coli O17:K52:H18 (strain UMN026 / ExPEC).